A 502-amino-acid polypeptide reads, in one-letter code: Lysine--tRNA ligase (502 aa).

Residues E409 and E416 each contribute to the Mg(2+) site.

Belongs to the class-II aminoacyl-tRNA synthetase family. Homodimer. It depends on Mg(2+) as a cofactor.

The protein localises to the cytoplasm. It catalyses the reaction tRNA(Lys) + L-lysine + ATP = L-lysyl-tRNA(Lys) + AMP + diphosphate. The chain is Lysine--tRNA ligase from Prochlorococcus marinus (strain SARG / CCMP1375 / SS120).